Reading from the N-terminus, the 277-residue chain is Probable redox regulatory protein ML2435 (277 aa).

It belongs to the Rv0495c family.

Essential for maintaining intracellular redox homeostasis. The sequence is that of Probable redox regulatory protein ML2435 from Mycobacterium leprae (strain TN).